Here is a 468-residue protein sequence, read N- to C-terminus: Protein maelstrom 2 (468 aa).

Positions 2–69 (PPKKHSGFMM…LTRVKKERLN (68 aa)) form a DNA-binding region, HMG box. Residues 374 to 393 (KEDSPTVLSPASSRRSLASS) are disordered. Residues 381–393 (LSPASSRRSLASS) are compositionally biased toward low complexity.

This sequence belongs to the maelstrom family.

It is found in the cytoplasm. The protein resides in the nucleus. Involved both in the piRNA and miRNA metabolic processes. As a component of the meiotic nuage, plays a central role during oogenesis by repressing transposable elements and preventing their mobilization, which is essential for the germline integrity. Repression of transposable elements is mediated via the piRNA metabolic process, which mediates the repression of transposable elements during meiosis by forming complexes composed of piRNAs and Piwi proteins and governs the repression of transposons. As a nuclear component, it is required for proper differentiation in the germline stem cell (GSC) lineage by repressing microRNA-7 (miR-7), thereby acting as an indirect regulator of bag-of-marbles (Bam). Acts by binding to the promoter of miR-7 gene and repressing its expression; miR-7 repression alleviates the Bam repression by miR-7, thereby allowing differentiation in the germline stem cell (GSC) lineage. In Drosophila ananassae (Fruit fly), this protein is Protein maelstrom 2 (mael2).